The sequence spans 205 residues: Small ribosomal subunit protein uS4 (205 aa).

The segment at 18 to 49 (NIWGRPKSPVNKREYGPGQHGQRRKGKLSDFG) is disordered. The 64-residue stretch at 94 to 157 (RRLDTVVYRA…KQLALVLEAN (64 aa)) folds into the S4 RNA-binding domain.

This sequence belongs to the universal ribosomal protein uS4 family. As to quaternary structure, part of the 30S ribosomal subunit. Contacts protein S5. The interaction surface between S4 and S5 is involved in control of translational fidelity.

In terms of biological role, one of the primary rRNA binding proteins, it binds directly to 16S rRNA where it nucleates assembly of the body of the 30S subunit. Its function is as follows. With S5 and S12 plays an important role in translational accuracy. This chain is Small ribosomal subunit protein uS4, found in Nitrobacter winogradskyi (strain ATCC 25391 / DSM 10237 / CIP 104748 / NCIMB 11846 / Nb-255).